Reading from the N-terminus, the 382-residue chain is Putative phospholipase A1 (382 aa).

The first 27 residues, 1-27 (MPTMGAEMNTRNMRYILLTGLLPMASA), serve as a signal peptide directing secretion. Over 28 to 65 (FGETALQCAALTDNVTRLACYDRIFAAQLPSSAGQEGQ) the chain is Periplasmic. The beta stranded transmembrane segment at 66-78 (ESKAVLNLTETVR) threads the bilayer. The Extracellular portion of the chain corresponds to 79–168 (SSLDKGEAVI…VQEKFGQQKR (90 aa)). Residues 169–183 (AETKLQVSFKSKIAE) traverse the membrane as a beta stranded segment. Over 184 to 189 (DLFKTR) the chain is Periplasmic. The beta stranded transmembrane segment at 190-202 (ADLWFGYTQRSDW) threads the bilayer. At 203–213 (QIYNQGRKSAP) the chain is on the extracellular side. Serine 211 serves as a coordination point for Ca(2+). Residues 214 to 233 (FRNTDYKPEIFLTQPVKADL) traverse the membrane as a beta stranded segment. Over 234–236 (PFG) the chain is Periplasmic. Residues 237–250 (GRLRMLGAGFVHQS) traverse the membrane as a beta stranded segment. Catalysis depends on histidine 248, which acts as the Proton acceptor. Serine 250 acts as the Nucleophile in catalysis. Residues 251–259 (NGQSRPESR) lie on the Extracellular side of the membrane. Serine 258 serves as a coordination point for Ca(2+). Residues 260-272 (SWNRIYAMAGMEW) traverse the membrane as a beta stranded segment. The Periplasmic segment spans residues 273-274 (GK). The chain crosses the membrane as a beta stranded span at residues 275–284 (LTVIPRVWVR). Residues 285-306 (AFDQSGDKNDNPDIADYMGYGD) are Extracellular-facing. Aspartate 294 contacts Ca(2+). Residues 307–313 (VKLQYRL) form a beta stranded membrane-spanning segment. Residues 314-315 (ND) lie on the Periplasmic side of the membrane. A beta stranded transmembrane segment spans residues 316 to 325 (RQNVYSVLRY). Over 326 to 332 (NPKTGYG) the chain is Extracellular. A beta stranded membrane pass occupies residues 333-341 (AIEAAYTFP). Residues 342 to 346 (IKGKL) lie on the Periplasmic side of the membrane. Residues 347-356 (KGVVRGFHGY) form a beta stranded membrane-spanning segment. The Extracellular portion of the chain corresponds to 357–365 (GESLIDYNH). Residues 366-377 (KQNGIGIGLMFN) form a beta stranded membrane-spanning segment. Residues 378 to 382 (DLDGI) are Periplasmic-facing.

Belongs to the phospholipase A1 family. In terms of assembly, homodimer; dimerization is reversible, and the dimeric form is the active one. It depends on Ca(2+) as a cofactor.

The protein resides in the cell outer membrane. The enzyme catalyses a 1,2-diacyl-sn-glycero-3-phosphocholine + H2O = a 2-acyl-sn-glycero-3-phosphocholine + a fatty acid + H(+). The catalysed reaction is a 1,2-diacyl-sn-glycero-3-phosphocholine + H2O = a 1-acyl-sn-glycero-3-phosphocholine + a fatty acid + H(+). Functionally, hydrolysis of phosphatidylcholine with phospholipase A2 (EC 3.1.1.4) and phospholipase A1 (EC 3.1.1.32) activities. This Neisseria meningitidis serogroup B (strain ATCC BAA-335 / MC58) protein is Putative phospholipase A1.